The sequence spans 453 residues: Ribulose bisphosphate carboxylase large chain (453 aa).

The propeptide occupies 1 to 2; it reads MS. Proline 3 bears the N-acetylproline mark. Position 14 is an N6,N6,N6-trimethyllysine (lysine 14). 2 residues coordinate substrate: asparagine 123 and threonine 173. Lysine 175 acts as the Proton acceptor in catalysis. A substrate-binding site is contributed by lysine 177. The Mg(2+) site is built by lysine 201, aspartate 203, and glutamate 204. Lysine 201 is subject to N6-carboxylysine. The Proton acceptor role is filled by histidine 294. The substrate site is built by arginine 295, histidine 327, and serine 379.

The protein belongs to the RuBisCO large chain family. Type I subfamily. Heterohexadecamer of 8 large chains and 8 small chains; disulfide-linked. The disulfide link is formed within the large subunit homodimers. The cofactor is Mg(2+). The disulfide bond which can form in the large chain dimeric partners within the hexadecamer appears to be associated with oxidative stress and protein turnover.

The protein localises to the plastid. It is found in the chloroplast. The enzyme catalyses 2 (2R)-3-phosphoglycerate + 2 H(+) = D-ribulose 1,5-bisphosphate + CO2 + H2O. The catalysed reaction is D-ribulose 1,5-bisphosphate + O2 = 2-phosphoglycolate + (2R)-3-phosphoglycerate + 2 H(+). In terms of biological role, ruBisCO catalyzes two reactions: the carboxylation of D-ribulose 1,5-bisphosphate, the primary event in carbon dioxide fixation, as well as the oxidative fragmentation of the pentose substrate in the photorespiration process. Both reactions occur simultaneously and in competition at the same active site. This chain is Ribulose bisphosphate carboxylase large chain, found in Galium parisiense (Wall bedstraw).